A 297-amino-acid chain; its full sequence is N-acetylneuraminate lyase (297 aa).

Aceneuramate-binding residues include S47 and T48. The Proton donor role is filled by Y137. K165 (schiff-base intermediate with substrate) is an active-site residue. Aceneuramate-binding residues include T167, G189, D191, E192, and S208.

Belongs to the DapA family. NanA subfamily. As to quaternary structure, homotetramer.

Its subcellular location is the cytoplasm. The enzyme catalyses aceneuramate = aldehydo-N-acetyl-D-mannosamine + pyruvate. Its pathway is amino-sugar metabolism; N-acetylneuraminate degradation; D-fructose 6-phosphate from N-acetylneuraminate: step 1/5. In terms of biological role, catalyzes the reversible aldol cleavage of N-acetylneuraminic acid (sialic acid; Neu5Ac) to form pyruvate and N-acetylmannosamine (ManNAc) via a Schiff base intermediate. In Escherichia coli (strain SMS-3-5 / SECEC), this protein is N-acetylneuraminate lyase.